Here is a 234-residue protein sequence, read N- to C-terminus: Thrombin-like enzyme acutin (234 aa).

Met1 is a propeptide. The Peptidase S1 domain maps to 2–225 (VIGGDECDIN…YTDWIQRNIA (224 aa)). Intrachain disulfides connect Cys8–Cys140, Cys27–Cys43, Cys75–Cys232, Cys119–Cys186, Cys151–Cys165, and Cys176–Cys201. Asn21 is a glycosylation site (N-linked (GlcNAc...) asparagine). Active-site charge relay system residues include His42 and Asp87. Ser180 (charge relay system) is an active-site residue.

The protein belongs to the peptidase S1 family. Snake venom subfamily. Monomer. Expressed by the venom gland.

It is found in the secreted. In terms of biological role, thrombin-like snake venom serine protease. Has arginyl esterase and fibrinogen clotting activities. The chain is Thrombin-like enzyme acutin from Deinagkistrodon acutus (Hundred-pace snake).